Consider the following 311-residue polypeptide: Malate dehydrogenase (311 aa).

NAD(+) is bound by residues 10–15 (GAGRVG) and aspartate 35. Arginine 84 and arginine 90 together coordinate substrate. NAD(+) is bound by residues asparagine 97 and 120–122 (VTN). Residues asparagine 122 and arginine 153 each contribute to the substrate site. The Proton acceptor role is filled by histidine 177.

This sequence belongs to the LDH/MDH superfamily. MDH type 3 family.

It carries out the reaction (S)-malate + NAD(+) = oxaloacetate + NADH + H(+). Catalyzes the reversible oxidation of malate to oxaloacetate. In Nitrosococcus oceani (strain ATCC 19707 / BCRC 17464 / JCM 30415 / NCIMB 11848 / C-107), this protein is Malate dehydrogenase.